The sequence spans 756 residues: 1,4-alpha-glucan branching enzyme GlgB (756 aa).

Catalysis depends on Asp431, which acts as the Nucleophile. The active-site Proton donor is Glu484.

It belongs to the glycosyl hydrolase 13 family. GlgB subfamily. Monomer.

It catalyses the reaction Transfers a segment of a (1-&gt;4)-alpha-D-glucan chain to a primary hydroxy group in a similar glucan chain.. It participates in glycan biosynthesis; glycogen biosynthesis. In terms of biological role, catalyzes the formation of the alpha-1,6-glucosidic linkages in glycogen by scission of a 1,4-alpha-linked oligosaccharide from growing alpha-1,4-glucan chains and the subsequent attachment of the oligosaccharide to the alpha-1,6 position. In Prochlorococcus marinus (strain MIT 9303), this protein is 1,4-alpha-glucan branching enzyme GlgB.